Here is a 580-residue protein sequence, read N- to C-terminus: MAEHAPRRCCLGWDFSTQQVKVVAVDAELNVFYEESVHFDRDLPEFGTQGGVHVHKDGLTVTSPVLMWVQALDIILEKMKASGFDFSQVLALSGAGQQHGSIYWKAGSQQALTSLSPDLPLHQQLQDCFSISDCPVWMDSSSTTQCRQLEAAMGGAQALSCLTGSRAYERFTGNQIAKIYQQNPEAYSHTERISLVSSFAASLFLGSYSPIDYSDGSGMNLLQIQDKVWSQACLGACAPHLEEKLGPPVPSCSVVGAISSYYVQRYGFPPGCKVVAFTGDNPASLAGMRLEEGDIAVSLGTSDTLFLWLQEPMPALEGHIFCNPVDSQHYMALLCFKNGSLMREKIRDESASRSWSDFSKALQSTEMGNGGNLGFYFDVMEITPEIIGRHRFNTENHKVAAFPGDVEVRALIEGQFMAKRIHAEGLGYRVMSKTKILATGGASHNRDILQVLADVFGAPVYVIDTANSACVGSAYRAFHGLAGGTDVPFSEVVKLAPNPRLAATPSPGASQRRWVGVSTTKLVSASDAQHRGSNLGRRVAGAMVRKCGTMLEDTRVLLKQSSWPKPAANLDIIKTPETLS.

Positions 99, 170, 280, and 281 each coordinate substrate. ATP-binding positions include Trp355, 441–442 (GA), and Asn445.

The protein belongs to the FGGY kinase family. Monomer.

It carries out the reaction D-xylulose + ATP = D-xylulose 5-phosphate + ADP + H(+). Phosphorylates D-xylulose to produce D-xylulose 5-phosphate, a molecule that may play an important role in the regulation of glucose metabolism and lipogenesis. The sequence is that of Xylulose kinase (XYLB) from Pongo abelii (Sumatran orangutan).